Consider the following 183-residue polypeptide: Probable apo-citrate lyase phosphoribosyl-dephospho-CoA transferase (183 aa).

Belongs to the CitX family.

It catalyses the reaction apo-[citrate lyase ACP] + 2'-(5''-triphospho-alpha-D-ribosyl)-3'-dephospho-CoA = holo-[citrate lyase ACP] + diphosphate. Functionally, transfers 2-(5''-triphosphoribosyl)-3'-dephosphocoenzyme-A on a serine residue to the apo-acyl carrier protein (gamma chain) of the citrate lyase to yield holo-acyl carrier protein. The chain is Probable apo-citrate lyase phosphoribosyl-dephospho-CoA transferase from Escherichia coli (strain 55989 / EAEC).